The primary structure comprises 146 residues: 3-dehydroquinate dehydratase (146 aa).

Tyr22 serves as the catalytic Proton acceptor. Substrate is bound by residues Asn73, His79, and Asp86. The Proton donor role is filled by His101. Residues 102 to 103 and Arg112 contribute to the substrate site; that span reads IS.

This sequence belongs to the type-II 3-dehydroquinase family. As to quaternary structure, homododecamer.

The catalysed reaction is 3-dehydroquinate = 3-dehydroshikimate + H2O. It participates in metabolic intermediate biosynthesis; chorismate biosynthesis; chorismate from D-erythrose 4-phosphate and phosphoenolpyruvate: step 3/7. Functionally, catalyzes a trans-dehydration via an enolate intermediate. The protein is 3-dehydroquinate dehydratase (aroQ) of Corynebacterium pseudotuberculosis (strain C231).